A 244-amino-acid chain; its full sequence is UPF0173 metal-dependent hydrolase RoseRS_3945 (244 aa).

It belongs to the UPF0173 family.

The protein is UPF0173 metal-dependent hydrolase RoseRS_3945 of Roseiflexus sp. (strain RS-1).